We begin with the raw amino-acid sequence, 124 residues long: Fluoride-specific ion channel FluC (124 aa).

4 consecutive transmembrane segments (helical) span residues 1–21 (MVPLIVAVSVGGIAGTLLRFA), 38–58 (TLAVNIVGCLLIGVLYGLFLI), 69–89 (GLMVGFLGGLTTFSSFSLDTV), and 99–119 (LALGYAAISVFGGLLATWAGL). Na(+)-binding residues include Gly76 and Thr79.

Belongs to the fluoride channel Fluc/FEX (TC 1.A.43) family.

The protein localises to the cell inner membrane. It carries out the reaction fluoride(in) = fluoride(out). With respect to regulation, na(+) is not transported, but it plays an essential structural role and its presence is essential for fluoride channel function. In terms of biological role, fluoride-specific ion channel. Important for reducing fluoride concentration in the cell, thus reducing its toxicity. This chain is Fluoride-specific ion channel FluC, found in Pseudomonas fluorescens (strain Pf0-1).